Consider the following 1480-residue polypeptide: Cystic fibrosis transmembrane conductance regulator (1480 aa).

The Cytoplasmic portion of the chain corresponds to 1–77 (MQRSPLEKAS…KLINALRRCF (77 aa)). A helical transmembrane segment spans residues 78-98 (FWRFMFYGIFLYLGEVTKAVQ). An ABC transmembrane type-1 1 domain is found at 81–365 (FMFYGIFLYL…WAVQTWYDSL (285 aa)). Topologically, residues 99 to 122 (PLLLGRIIASYDPDNKEERSIAIY) are extracellular. The chain crosses the membrane as a helical span at residues 123–146 (LGIGLCLLFIVRTLLLHPAIFGLH). Over 147 to 195 (HIGMQMRIAMFSLIYKKTLKLSSRVLDKISIGQLVSLLSNNLNKFDEGL) the chain is Cytoplasmic. Residues 196–216 (ALAHFVWIAPLQVALLMGLIW) traverse the membrane as a helical segment. Topologically, residues 217 to 222 (ELLQAS) are extracellular. The helical transmembrane segment at 223 to 243 (AFCGLGFLIVLALFQAGLGRM) threads the bilayer. The Cytoplasmic portion of the chain corresponds to 244–298 (MMKYRDQRAGKISERLVITSEMIENIQSVKAYCWEEAMEKMIENLRQTELKLTRK). A helical membrane pass occupies residues 299-319 (AAYVRYFNSSAFFFSGFFVVF). Residues 320–339 (LSVLPYALIKGIVLRKIFTT) lie on the Extracellular side of the membrane. The chain crosses the membrane as a helical span at residues 340–358 (ISFCIVLRMAVTRQFPWAV). At 359–858 (QTWYDSLGAI…YLRYITVHKS (500 aa)) the chain is on the cytoplasmic side. Residues Trp-401, Ser-434, 458-465 (GSTGAGKT), and Gln-493 each bind ATP. An ABC transporter 1 domain is found at 423-646 (NGDDSLFFSN…RPDFSSKLMG (224 aa)). Cys-524 is lipidated: S-palmitoyl cysteine. 2 positions are modified to phosphoserine: Ser-549 and Ser-660. A disordered R region region spans residues 654–831 (SAERRNSILT…EEINEEDLKE (178 aa)). Position 670 is a phosphoserine; by PKA (Ser-670). The residue at position 686 (Ser-686) is a Phosphoserine. Residue Lys-688 forms a Glycyl lysine isopeptide (Lys-Gly) (interchain with G-Cter in ubiquitin) linkage. Ser-700 and Ser-712 each carry phosphoserine. Thr-717 carries the post-translational modification Phosphothreonine. Phosphoserine is present on residues Ser-737, Ser-753, Ser-768, Ser-790, Ser-795, and Ser-813. Residues 859 to 879 (LIFVLIWCLVIFLAEVAASLV) form a helical membrane-spanning segment. One can recognise an ABC transmembrane type-1 2 domain in the interval 859 to 1155 (LIFVLIWCLV…AVNSSIDVDS (297 aa)). The Extracellular portion of the chain corresponds to 880–918 (VLWLLGNTPLQDKGNSTHSRNNSYAVIITSTSSYYVFYI). 2 N-linked (GlcNAc...) asparagine glycosylation sites follow: Asn-894 and Asn-900. A discontinuously helical transmembrane segment spans residues 919–939 (YVGVADTLLAMGFFRGLPLVH). Topologically, residues 940–990 (TLITVSKILHHKMLHSVLQAPMSTLNTLKAGGILNRFSKDIAILDDLLPLT) are cytoplasmic. The helical transmembrane segment at 991-1011 (IFDFIQLLLIVIGAIAVVAVL) threads the bilayer. The Extracellular segment spans residues 1012-1013 (QP). Residues 1014-1034 (YIFVATVPVIVAFIMLRAYFL) form a helical membrane-spanning segment. At 1035–1095 (QTSQQLKQLE…TANWFLYLST (61 aa)) the chain is on the cytoplasmic side. Residues 1096 to 1116 (LRWFQMRIEMIFVMFFIAVTF) form a helical membrane-spanning segment. The Extracellular portion of the chain corresponds to 1117–1130 (ISILTTGEGEGRIG). A helical transmembrane segment spans residues 1131 to 1151 (IILTLAMNIMSTLQWAVNSSI). The Cytoplasmic portion of the chain corresponds to 1152-1480 (DVDSLMRSVS…TEEEVQDTRL (329 aa)). The region spanning 1210–1443 (MTVKDLSAKY…RSLFRQAISP (234 aa)) is the ABC transporter 2 domain. ATP-binding positions include Tyr-1219 and 1244 to 1251 (GRTGSGKS). Positions 1386–1480 (RTLKQAFADC…TEEEVQDTRL (95 aa)) are interaction with GORASP2. Residue Cys-1395 is the site of S-palmitoyl cysteine attachment. Residues Ser-1444 and Ser-1456 each carry the phosphoserine modification. Positions 1451–1480 (PHRNSSKGKSQPQIAALKEETEEEVQDTRL) are disordered. The span at 1470–1480 (ETEEEVQDTRL) shows a compositional bias: acidic residues. The PDZ-binding signature appears at 1478–1480 (TRL).

It belongs to the ABC transporter superfamily. ABCC family. CFTR transporter (TC 3.A.1.202) subfamily. Monomer; does not require oligomerization for channel activity. May form oligomers in the membrane. Interacts with SLC26A3, SLC26A6 and NHERF1. Interacts with SHANK2. Interacts with MYO6. Interacts (via C-terminus) with GOPC (via PDZ domain); this promotes CFTR internalization and thereby decreases channel activity. Interacts with SLC4A7 through NHERF1. Found in a complex with MYO5B and RAB11A. Interacts with ANO1. Interacts with SLC26A8. Interacts with AHCYL1; the interaction increases CFTR activity. Interacts with CSE1L. The core-glycosylated form interacts with GORASP2 (via PDZ GRASP-type 1 domain) in respone to ER stress. Interacts with MARCHF2; the interaction leads to CFTR ubiqtuitination and degradation. Interacts with ADGRG2. Post-translationally, N-glycosylated. In terms of processing, phosphorylated; cAMP treatment promotes phosphorylation and activates the channel. Dephosphorylation decreases the ATPase activity (in vitro). Phosphorylation at PKA sites activates the channel. Phosphorylation at PKC sites enhances the response to phosphorylation by PKA. Phosphorylated by AMPK; this inhibits channel activity. Ubiquitinated, leading to its degradation in the lysosome. Deubiquitination by USP10 in early endosomes enhances its endocytic recycling to the cell membrane. Ubiquitinated by RNF185 during ER stress. Ubiquitinated by MARCHF2.

It is found in the apical cell membrane. Its subcellular location is the early endosome membrane. The protein resides in the cell membrane. The protein localises to the recycling endosome membrane. It localises to the endoplasmic reticulum membrane. It is found in the nucleus. It carries out the reaction ATP + H2O + closed Cl(-) channel = ADP + phosphate + open Cl(-) channel.. The enzyme catalyses chloride(in) = chloride(out). The catalysed reaction is hydrogencarbonate(in) = hydrogencarbonate(out). It catalyses the reaction ATP + H2O = ADP + phosphate + H(+). Epithelial ion channel that plays an important role in the regulation of epithelial ion and water transport and fluid homeostasis. Mediates the transport of chloride ions across the cell membrane. Possesses an intrinsic ATPase activity and utilizes ATP to gate its channel; the passive flow of anions through the channel is gated by cycles of ATP binding and hydrolysis by the ATP-binding domains. The ion channel is also permeable to HCO(3)(-); selectivity depends on the extracellular chloride concentration. Exerts its function also by modulating the activity of other ion channels and transporters. Contributes to the regulation of the pH and the ion content of the epithelial fluid layer. Modulates the activity of the epithelial sodium channel (ENaC) complex, in part by regulating the cell surface expression of the ENaC complex. May regulate bicarbonate secretion and salvage in epithelial cells by regulating the transporter SLC4A7. Can inhibit the chloride channel activity of ANO1. Plays a role in the chloride and bicarbonate homeostasis during sperm epididymal maturation and capacitation. The polypeptide is Cystic fibrosis transmembrane conductance regulator (Nomascus leucogenys (Northern white-cheeked gibbon)).